The primary structure comprises 446 residues: MTTMTPQEIVSELDKHIVGQKNAKKAVAIALRNRWRRSQVAEPLRQEITPKNILMIGPTGVGKTEIARRLARLANAPFIKIEATKFTEVGYVGRDVETIIRDLVEMAIKSHRERAMKAMRARAEDAAEERILDVLLPTVRGPNFFAENSESTAAENTTRQKFRKKLREGELDDKEVDIEVAAPSLQAEIFAPPGMEELTQQIQGMFQSVGGGKKKSRKLSIKEALKLLTDEEAAKLVNDDDVKQEAVKAVEQNGIVFLDELDKIASRSEMHGADVSRQGVQRDLLPLVEGTTVSTKYGMIKTDHILFIASGAFHLSKPSDLIPELQGRFPIRVELDSLSVADFECILTQTDACLTRQYQALLETEGVQLEFVEDGIRRLAEIAFQVNEKTENIGARRLHTVMEKLLEEVSFDAGKVGLDKVLIDAAYVNTKLGELAADEDLSRYVL.

ATP contacts are provided by residues V18, 60–65 (GVGKTE), D259, E324, and R396.

The protein belongs to the ClpX chaperone family. HslU subfamily. As to quaternary structure, a double ring-shaped homohexamer of HslV is capped on each side by a ring-shaped HslU homohexamer. The assembly of the HslU/HslV complex is dependent on binding of ATP.

The protein resides in the cytoplasm. In terms of biological role, ATPase subunit of a proteasome-like degradation complex; this subunit has chaperone activity. The binding of ATP and its subsequent hydrolysis by HslU are essential for unfolding of protein substrates subsequently hydrolyzed by HslV. HslU recognizes the N-terminal part of its protein substrates and unfolds these before they are guided to HslV for hydrolysis. This is ATP-dependent protease ATPase subunit HslU from Dechloromonas aromatica (strain RCB).